The following is a 413-amino-acid chain: MAGLAPEGSQFDARQYDAKMTELLGTEQEEFFTSYDEVYDSFDAMGLQENLLRGIYAYGFEKPSAIQQRGIVPFCKGLDVIQQAQSGTGKTATFCSGVLQQLDYSLVECQALVLAPTRELAQQIEKVMRALGDYLGVKVHACVGGTSVREDQRILQSGVHVVVGTPGRVFDMLRRQSLRPDHIKMFVLDEADEMLSRGFKDQIYDIFQLLPPKIQVGVFSATMPPEALEITRKFMNKPVRILVKRDDVTLEGIKQFYVNVDKEEWKLETLCDLYETLAITQSVIFVNTRRKVDWLTDKMRTRDHTVSATHGDMDQNTRDIIMREFRSGSSRVLITTDLLARGIDVQQVSLVINYDLPTQPENYLHRIGRSGRFGRKGVAINFVIKDDERMLSDIQRFYNVVIEELPANVADLL.

A Q motif motif is present at residues 40–68 (DSFDAMGLQENLLRGIYAYGFEKPSAIQQ). Residues 71-241 (IVPFCKGLDV…RKFMNKPVRI (171 aa)) enclose the Helicase ATP-binding domain. ATP is bound at residue 84 to 91 (AQSGTGKT). Residues 189-192 (DEAD) carry the DEAD box motif. Residues 252–413 (GIKQFYVNVD…ELPANVADLL (162 aa)) form the Helicase C-terminal domain.

The protein belongs to the DEAD box helicase family. eIF4A subfamily. EIF4F is a multi-subunit complex, the composition of which varies with external and internal environmental conditions. It is composed of at least EIF4A, EIF4E and EIF4G.

The enzyme catalyses ATP + H2O = ADP + phosphate + H(+). Functionally, ATP-dependent RNA helicase which is a subunit of the eIF4F complex involved in cap recognition and is required for mRNA binding to ribosome. In the current model of translation initiation, eIF4A unwinds RNA secondary structures in the 5'-UTR of mRNAs which is necessary to allow efficient binding of the small ribosomal subunit, and subsequent scanning for the initiator codon. The protein is Eukaryotic initiation factor 4A-7 of Nicotiana tabacum (Common tobacco).